A 161-amino-acid chain; its full sequence is Regulatory protein RecX (161 aa).

This sequence belongs to the RecX family.

It is found in the cytoplasm. Functionally, modulates RecA activity. In Halorhodospira halophila (strain DSM 244 / SL1) (Ectothiorhodospira halophila (strain DSM 244 / SL1)), this protein is Regulatory protein RecX.